Consider the following 950-residue polypeptide: 2-oxoglutarate dehydrogenase E1 component (950 aa).

This sequence belongs to the alpha-ketoglutarate dehydrogenase family. In terms of assembly, homodimer. Part of the 2-oxoglutarate dehydrogenase (OGDH) complex composed of E1 (2-oxoglutarate dehydrogenase), E2 (dihydrolipoamide succinyltransferase) and E3 (dihydrolipoamide dehydrogenase); the complex contains multiple copies of the three enzymatic components (E1, E2 and E3). It depends on thiamine diphosphate as a cofactor.

The catalysed reaction is N(6)-[(R)-lipoyl]-L-lysyl-[protein] + 2-oxoglutarate + H(+) = N(6)-[(R)-S(8)-succinyldihydrolipoyl]-L-lysyl-[protein] + CO2. Its function is as follows. E1 component of the 2-oxoglutarate dehydrogenase (OGDH) complex which catalyzes the decarboxylation of 2-oxoglutarate, the first step in the conversion of 2-oxoglutarate to succinyl-CoA and CO(2). The polypeptide is 2-oxoglutarate dehydrogenase E1 component (Geobacillus kaustophilus (strain HTA426)).